The following is a 144-amino-acid chain: Large-conductance mechanosensitive channel (144 aa).

Helical transmembrane passes span 14–34 (VLDM…VTSF) and 81–101 (GTFL…FLII).

Belongs to the MscL family. As to quaternary structure, homopentamer.

Its subcellular location is the cell inner membrane. In terms of biological role, channel that opens in response to stretch forces in the membrane lipid bilayer. May participate in the regulation of osmotic pressure changes within the cell. In Bdellovibrio bacteriovorus (strain ATCC 15356 / DSM 50701 / NCIMB 9529 / HD100), this protein is Large-conductance mechanosensitive channel.